Reading from the N-terminus, the 477-residue chain is Ankyrin repeat, SAM and basic leucine zipper domain-containing protein 1 (477 aa).

The segment at methionine 1–glycine 24 is disordered. Phosphoserine occurs at positions 17, 18, and 20. ANK repeat units lie at residues glutamate 45–serine 74, tyrosine 78–phenylalanine 107, aspartate 110–valine 144, arginine 148–alanine 177, asparagine 181–leucine 210, and aspartate 214–glycine 243. In terms of domain architecture, SAM spans serine 272–methionine 334.

As to quaternary structure, interacts with DDX4, PIWIL1, RANBP9 and TDRD1.

The protein localises to the cytoplasm. Functionally, plays a central role during spermatogenesis by repressing transposable elements and preventing their mobilization, which is essential for the germline integrity. Acts via the piRNA metabolic process, which mediates the repression of transposable elements during meiosis by forming complexes composed of piRNAs and Piwi proteins and governs the methylation and subsequent repression of transposons. Its association with pi-bodies suggests a participation in the primary piRNAs metabolic process. Required prior to the pachytene stage to facilitate the production of multiple types of piRNAs, including those associated with repeats involved in the regulation of retrotransposons. May act by mediating protein-protein interactions during germ cell maturation. The sequence is that of Ankyrin repeat, SAM and basic leucine zipper domain-containing protein 1 (ASZ1) from Echinops telfairi (Lesser hedgehog tenrec).